Consider the following 180-residue polypeptide: Mitochondrial membrane protein FMP33 (180 aa).

The next 3 helical transmembrane spans lie at 34–54 (LYTS…LYLE), 121–141 (FSIV…STLG), and 145–165 (ILYK…YMAL).

Its subcellular location is the mitochondrion membrane. This Saccharomyces cerevisiae (strain ATCC 204508 / S288c) (Baker's yeast) protein is Mitochondrial membrane protein FMP33 (FMP33).